Here is a 536-residue protein sequence, read N- to C-terminus: Berberine bridge enzyme-like 2 (536 aa).

The first 20 residues, methionine 1–alanine 20, serve as a signal peptide directing secretion. A disulfide bridge connects residues cysteine 35 and cysteine 98. Residues asparagine 38, asparagine 73, asparagine 136, asparagine 266, asparagine 334, and asparagine 352 are each glycosylated (N-linked (GlcNAc...) asparagine). In terms of domain architecture, FAD-binding PCMH-type spans alanine 76–valine 250. The segment at residues histidine 113 to cysteine 175 is a cross-link (6-(S-cysteinyl)-8alpha-(pros-histidyl)-FAD (His-Cys)).

It belongs to the oxygen-dependent FAD-linked oxidoreductase family. The cofactor is FAD. Post-translationally, the FAD cofactor is bound via a bicovalent 6-S-cysteinyl, 8alpha-N1-histidyl FAD linkage.

The protein resides in the secreted. It is found in the cell wall. The chain is Berberine bridge enzyme-like 2 from Arabidopsis thaliana (Mouse-ear cress).